The following is an 89-amino-acid chain: MAVADINKSEVIKQFARGTNDTGSPEVQVALLTTRINELTPHFKANMKDHHSRRGLLRMVSRRRRLLDYLKSNDADRYRALIEKLGLRK.

The protein belongs to the universal ribosomal protein uS15 family. In terms of assembly, part of the 30S ribosomal subunit. Forms a bridge to the 50S subunit in the 70S ribosome, contacting the 23S rRNA.

Functionally, one of the primary rRNA binding proteins, it binds directly to 16S rRNA where it helps nucleate assembly of the platform of the 30S subunit by binding and bridging several RNA helices of the 16S rRNA. In terms of biological role, forms an intersubunit bridge (bridge B4) with the 23S rRNA of the 50S subunit in the ribosome. This chain is Small ribosomal subunit protein uS15, found in Cupriavidus pinatubonensis (strain JMP 134 / LMG 1197) (Cupriavidus necator (strain JMP 134)).